The chain runs to 134 residues: Small ribosomal subunit protein uS9c (134 aa).

This sequence belongs to the universal ribosomal protein uS9 family.

The protein resides in the plastid. It localises to the chloroplast. The protein is Small ribosomal subunit protein uS9c (rps9) of Guillardia theta (Cryptophyte).